The primary structure comprises 156 residues: 3-hydroxyacyl-[acyl-carrier-protein] dehydratase FabZ (156 aa).

H57 is an active-site residue.

This sequence belongs to the thioester dehydratase family. FabZ subfamily.

The protein resides in the cytoplasm. The catalysed reaction is a (3R)-hydroxyacyl-[ACP] = a (2E)-enoyl-[ACP] + H2O. Functionally, involved in unsaturated fatty acids biosynthesis. Catalyzes the dehydration of short chain beta-hydroxyacyl-ACPs and long chain saturated and unsaturated beta-hydroxyacyl-ACPs. In Anaeromyxobacter dehalogenans (strain 2CP-C), this protein is 3-hydroxyacyl-[acyl-carrier-protein] dehydratase FabZ.